The following is a 302-amino-acid chain: Formylmethanofuran--tetrahydromethanopterin formyltransferase (302 aa).

Belongs to the FTR family. In terms of assembly, homotetramer.

Its subcellular location is the cytoplasm. The enzyme catalyses N-formylmethanofuran + 5,6,7,8-tetrahydromethanopterin + H(+) = N(5)-formyl-5,6,7,8-tetrahydromethanopterin + methanofuran. Its pathway is one-carbon metabolism; formaldehyde degradation; formate from formaldehyde (H(4)MPT route): step 4/5. In terms of biological role, catalyzes the transfer of a formyl group from 5-formyl tetrahydromethanopterin (5-formyl-H(4)MPT) to methanofuran (MFR) to produce formylmethanofuran (formyl-MFR) and tetrahydromethanopterin (H(4)MPT). The sequence is that of Formylmethanofuran--tetrahydromethanopterin formyltransferase from Methylobacillus flagellatus (strain ATCC 51484 / DSM 6875 / VKM B-1610 / KT).